Reading from the N-terminus, the 415-residue chain is WD-40 repeat-containing protein MSI2 (415 aa).

WD repeat units follow at residues 166-206, 215-255, 258-298, 302-342, and 361-401; these read GHDK…QDKV, GHES…MQHQ, VHER…APLH, SHEG…EEQL, and GHKA…YRDE. A DWD box motif is present at residues 232–248; the sequence is LFGSAGEDGRLVIWDTR.

Belongs to the WD repeat RBAP46/RBAP48/MSI1 family.

It is found in the nucleus. Core histone-binding subunit that may target chromatin assembly factors, chromatin remodeling factors and histone deacetylases to their histone substrates in a manner that is regulated by nucleosomal DNA. In Arabidopsis thaliana (Mouse-ear cress), this protein is WD-40 repeat-containing protein MSI2 (MSI2).